The following is a 98-amino-acid chain: Integration host factor subunit alpha (98 aa).

Residues 52-73 (FDLREKNQRPGRNPKTGEDIPI) are disordered.

Belongs to the bacterial histone-like protein family. Heterodimer of an alpha and a beta chain.

In terms of biological role, this protein is one of the two subunits of integration host factor, a specific DNA-binding protein that functions in genetic recombination as well as in transcriptional and translational control. In Aeromonas hydrophila subsp. hydrophila (strain ATCC 7966 / DSM 30187 / BCRC 13018 / CCUG 14551 / JCM 1027 / KCTC 2358 / NCIMB 9240 / NCTC 8049), this protein is Integration host factor subunit alpha.